The following is a 342-amino-acid chain: Holliday junction branch migration complex subunit RuvB (342 aa).

The large ATPase domain (RuvB-L) stretch occupies residues 1 to 181 (MENRMVTPFD…FGMLCAMEFY (181 aa)). ATP-binding positions include leucine 20, arginine 21, glycine 62, lysine 65, threonine 66, threonine 67, 128 to 130 (EDY), arginine 171, tyrosine 181, and arginine 218. Threonine 66 contributes to the Mg(2+) binding site. Residues 182-252 (TDEELMEIVV…GAKAALDLLE (71 aa)) form a small ATPAse domain (RuvB-S) region. A head domain (RuvB-H) region spans residues 255–342 (KEGLDKIDNK…KDNQVSIFNK (88 aa)). DNA is bound by residues arginine 310 and arginine 315.

This sequence belongs to the RuvB family. Homohexamer. Forms an RuvA(8)-RuvB(12)-Holliday junction (HJ) complex. HJ DNA is sandwiched between 2 RuvA tetramers; dsDNA enters through RuvA and exits via RuvB. An RuvB hexamer assembles on each DNA strand where it exits the tetramer. Each RuvB hexamer is contacted by two RuvA subunits (via domain III) on 2 adjacent RuvB subunits; this complex drives branch migration. In the full resolvosome a probable DNA-RuvA(4)-RuvB(12)-RuvC(2) complex forms which resolves the HJ.

The protein resides in the cytoplasm. The enzyme catalyses ATP + H2O = ADP + phosphate + H(+). Functionally, the RuvA-RuvB-RuvC complex processes Holliday junction (HJ) DNA during genetic recombination and DNA repair, while the RuvA-RuvB complex plays an important role in the rescue of blocked DNA replication forks via replication fork reversal (RFR). RuvA specifically binds to HJ cruciform DNA, conferring on it an open structure. The RuvB hexamer acts as an ATP-dependent pump, pulling dsDNA into and through the RuvAB complex. RuvB forms 2 homohexamers on either side of HJ DNA bound by 1 or 2 RuvA tetramers; 4 subunits per hexamer contact DNA at a time. Coordinated motions by a converter formed by DNA-disengaged RuvB subunits stimulates ATP hydrolysis and nucleotide exchange. Immobilization of the converter enables RuvB to convert the ATP-contained energy into a lever motion, pulling 2 nucleotides of DNA out of the RuvA tetramer per ATP hydrolyzed, thus driving DNA branch migration. The RuvB motors rotate together with the DNA substrate, which together with the progressing nucleotide cycle form the mechanistic basis for DNA recombination by continuous HJ branch migration. Branch migration allows RuvC to scan DNA until it finds its consensus sequence, where it cleaves and resolves cruciform DNA. This is Holliday junction branch migration complex subunit RuvB from Clostridium botulinum (strain ATCC 19397 / Type A).